A 414-amino-acid chain; its full sequence is Carbohydrate sulfotransferase 12 (414 aa).

Residues 1 to 5 (MTKAR) lie on the Cytoplasmic side of the membrane. The chain crosses the membrane as a helical; Signal-anchor for type II membrane protein span at residues 6–26 (LFRLWLVLGSVFMILLIIVYW). Residues 27 to 414 (DSAGAAHFYL…YPKPENLLRD (388 aa)) are Lumenal-facing. The tract at residues 80–125 (QSDLPRKETEQPPAPGSMEESVRGYDWSPRDARRSPDQGRQQAERR) is disordered. Over residues 99-125 (ESVRGYDWSPRDARRSPDQGRQQAERR) the composition is skewed to basic and acidic residues. N-linked (GlcNAc...) asparagine glycosylation is present at asparagine 134. A 3'-phosphoadenylyl sulfate-binding site is contributed by 171–177 (PKVACTN). N-linked (GlcNAc...) asparagine glycosylation is present at asparagine 209. 245–253 (RDPFVRLIS) contacts 3'-phosphoadenylyl sulfate. Asparagine 280 and asparagine 370 each carry an N-linked (GlcNAc...) asparagine glycan.

The protein belongs to the sulfotransferase 2 family. As to expression, widely expressed. Expressed a high level in spinal chord, heart, spleen, thyroid, pituitary gland, adrenal gland, peripheral blood leukocytes, thymus, lung, small intestine, fetal kidney, fetal spleen and fetal lung.

The protein localises to the golgi apparatus membrane. It catalyses the reaction chondroitin beta-D-glucuronate + n 3'-phosphoadenylyl sulfate = chondroitin 4'-sulfate + n adenosine 3',5'-bisphosphate + n H(+). In terms of biological role, catalyzes the transfer of sulfate to position 4 of the N-acetylgalactosamine (GalNAc) residue of chondroitin and desulfated dermatan sulfate. Chondroitin sulfate constitutes the predominant proteoglycan present in cartilage and is distributed on the surfaces of many cells and extracellular matrices. Activity toward partially desulfated dermatan sulfate is however lower. Does not form 4, 6-di-O-sulfated GalNAc when chondroitin sulfate C is used as an acceptor. The chain is Carbohydrate sulfotransferase 12 (CHST12) from Homo sapiens (Human).